The chain runs to 694 residues: Polyribonucleotide nucleotidyltransferase (694 aa).

Mg(2+) is bound by residues Asp-486 and Asp-492. One can recognise a KH domain in the interval 553 to 612 (PRIETMQIKPTKIASVIGPGGKQIRQIIEETGVQIDVNDLGVVSISASSASAINKAKEII). The 69-residue stretch at 622-690 (GKTYRGRVTS…EKGQLKLSHK (69 aa)) folds into the S1 motif domain.

Belongs to the polyribonucleotide nucleotidyltransferase family. It depends on Mg(2+) as a cofactor.

The protein resides in the cytoplasm. It catalyses the reaction RNA(n+1) + phosphate = RNA(n) + a ribonucleoside 5'-diphosphate. Its function is as follows. Involved in mRNA degradation. Catalyzes the phosphorolysis of single-stranded polyribonucleotides processively in the 3'- to 5'-direction. This Chlamydia pneumoniae (Chlamydophila pneumoniae) protein is Polyribonucleotide nucleotidyltransferase.